The chain runs to 78 residues: Short neurotoxin OH-5 (78 aa).

An N-terminal signal peptide occupies residues Met-1–Thr-21. Cystine bridges form between Cys-24–Cys-40, Cys-33–Cys-58, Cys-62–Cys-70, and Cys-71–Cys-76.

This sequence belongs to the three-finger toxin family. Short-chain subfamily. In terms of tissue distribution, expressed by the venom gland.

It is found in the secreted. In terms of biological role, this three-finger toxin binds and inhibits the nicotinic acetylcholine receptor (nAChR). The sequence is that of Short neurotoxin OH-5 from Ophiophagus hannah (King cobra).